We begin with the raw amino-acid sequence, 670 residues long: Methionine--tRNA ligase (670 aa).

The 'HIGH' region signature appears at 14–24; it reads PYANGHLHLGH. Zn(2+)-binding residues include Cys145, Cys148, Cys158, and Cys161. The short motif at 330 to 334 is the 'KMSKS' region element; it reads KMSKS. Residue Lys333 participates in ATP binding. Positions 570–670 constitute a tRNA-binding domain; sequence DFAKVDLRIA…AGALPGMKVK (101 aa).

It belongs to the class-I aminoacyl-tRNA synthetase family. MetG type 1 subfamily. Homodimer. Zn(2+) is required as a cofactor.

It is found in the cytoplasm. The catalysed reaction is tRNA(Met) + L-methionine + ATP = L-methionyl-tRNA(Met) + AMP + diphosphate. In terms of biological role, is required not only for elongation of protein synthesis but also for the initiation of all mRNA translation through initiator tRNA(fMet) aminoacylation. The protein is Methionine--tRNA ligase of Legionella pneumophila subsp. pneumophila (strain Philadelphia 1 / ATCC 33152 / DSM 7513).